We begin with the raw amino-acid sequence, 199 residues long: MTRCDDSPSASQISITHVTQGSCVASSSPNEVYATILGSCICTCMCDPVAGVGGMNHFLLPSADVEDAQHLRYGSHAMELLINALLKLGAARQRIEAKIFGGAMMTPQLGAIGQANAAFARRYLKDEGIRCTAHSLGGNRARRIRFWPKTGRVQQMFLGSEDVVPNEQPQFRLQGGAGDVTFFDRHNNAEMPDPIKEPR.

This sequence belongs to the CheD family.

It carries out the reaction L-glutaminyl-[protein] + H2O = L-glutamyl-[protein] + NH4(+). Probably deamidates glutamine residues to glutamate on methyl-accepting chemotaxis receptors (MCPs), playing an important role in chemotaxis. This is Probable chemoreceptor glutamine deamidase CheD from Cereibacter sphaeroides (strain ATCC 17023 / DSM 158 / JCM 6121 / CCUG 31486 / LMG 2827 / NBRC 12203 / NCIMB 8253 / ATH 2.4.1.) (Rhodobacter sphaeroides).